The chain runs to 249 residues: DNA repair protein RecO (249 aa).

It belongs to the RecO family.

Functionally, involved in DNA repair and RecF pathway recombination. The polypeptide is DNA repair protein RecO (Exiguobacterium sp. (strain ATCC BAA-1283 / AT1b)).